A 611-amino-acid polypeptide reads, in one-letter code: Elongation factor 4 (611 aa).

The tr-type G domain occupies 12–193 (AVIRNFCIIA…TIVAKVPAPE (182 aa)). Residues 24 to 29 (DHGKST) and 140 to 143 (NKID) each bind GTP.

This sequence belongs to the TRAFAC class translation factor GTPase superfamily. Classic translation factor GTPase family. LepA subfamily.

The protein localises to the cell membrane. It catalyses the reaction GTP + H2O = GDP + phosphate + H(+). Required for accurate and efficient protein synthesis under certain stress conditions. May act as a fidelity factor of the translation reaction, by catalyzing a one-codon backward translocation of tRNAs on improperly translocated ribosomes. Back-translocation proceeds from a post-translocation (POST) complex to a pre-translocation (PRE) complex, thus giving elongation factor G a second chance to translocate the tRNAs correctly. Binds to ribosomes in a GTP-dependent manner. This is Elongation factor 4 from Cutibacterium acnes (strain DSM 16379 / KPA171202) (Propionibacterium acnes).